The primary structure comprises 316 residues: Probable cell division protein WhiA (316 aa).

Residues 276–309 (SLEELGKIAEPQITKDAIAGRIRRLLQLAEKTEK) constitute a DNA-binding region (H-T-H motif).

The protein belongs to the WhiA family.

Its function is as follows. Involved in cell division and chromosome segregation. In Bifidobacterium longum (strain NCC 2705), this protein is Probable cell division protein WhiA.